The following is a 227-amino-acid chain: Cytochrome c oxidase subunit 2 (227 aa).

Residues 1–14 are Mitochondrial intermembrane-facing; it reads MAYPFQLGLQDATS. The chain crosses the membrane as a helical span at residues 15–45; it reads PIMEELLHFHDHTLMIVFLISSLVLYIISLM. The Mitochondrial matrix segment spans residues 46 to 59; that stretch reads LTTKLTHTSTMDAQ. The chain crosses the membrane as a helical span at residues 60 to 87; sequence EVETVWTILPAIILVLIALPSLRILYMM. Residues 88–227 lie on the Mitochondrial intermembrane side of the membrane; it reads DEINNPSLTV…YFETWSALMV (140 aa). Positions 161, 196, 198, 200, 204, and 207 each coordinate Cu cation. Glu198 provides a ligand contact to Mg(2+). At Tyr218 the chain carries Phosphotyrosine.

It belongs to the cytochrome c oxidase subunit 2 family. Component of the cytochrome c oxidase (complex IV, CIV), a multisubunit enzyme composed of 14 subunits. The complex is composed of a catalytic core of 3 subunits MT-CO1, MT-CO2 and MT-CO3, encoded in the mitochondrial DNA, and 11 supernumerary subunits COX4I, COX5A, COX5B, COX6A, COX6B, COX6C, COX7A, COX7B, COX7C, COX8 and NDUFA4, which are encoded in the nuclear genome. The complex exists as a monomer or a dimer and forms supercomplexes (SCs) in the inner mitochondrial membrane with NADH-ubiquinone oxidoreductase (complex I, CI) and ubiquinol-cytochrome c oxidoreductase (cytochrome b-c1 complex, complex III, CIII), resulting in different assemblies (supercomplex SCI(1)III(2)IV(1) and megacomplex MCI(2)III(2)IV(2)). Found in a complex with TMEM177, COA6, COX18, COX20, SCO1 and SCO2. Interacts with TMEM177 in a COX20-dependent manner. Interacts with COX20. Interacts with COX16. The cofactor is Cu cation.

It localises to the mitochondrion inner membrane. The catalysed reaction is 4 Fe(II)-[cytochrome c] + O2 + 8 H(+)(in) = 4 Fe(III)-[cytochrome c] + 2 H2O + 4 H(+)(out). Component of the cytochrome c oxidase, the last enzyme in the mitochondrial electron transport chain which drives oxidative phosphorylation. The respiratory chain contains 3 multisubunit complexes succinate dehydrogenase (complex II, CII), ubiquinol-cytochrome c oxidoreductase (cytochrome b-c1 complex, complex III, CIII) and cytochrome c oxidase (complex IV, CIV), that cooperate to transfer electrons derived from NADH and succinate to molecular oxygen, creating an electrochemical gradient over the inner membrane that drives transmembrane transport and the ATP synthase. Cytochrome c oxidase is the component of the respiratory chain that catalyzes the reduction of oxygen to water. Electrons originating from reduced cytochrome c in the intermembrane space (IMS) are transferred via the dinuclear copper A center (CU(A)) of subunit 2 and heme A of subunit 1 to the active site in subunit 1, a binuclear center (BNC) formed by heme A3 and copper B (CU(B)). The BNC reduces molecular oxygen to 2 water molecules using 4 electrons from cytochrome c in the IMS and 4 protons from the mitochondrial matrix. This Cerdocyon thous (Crab-eating fox) protein is Cytochrome c oxidase subunit 2 (MT-CO2).